The primary structure comprises 250 residues: 5'-nucleotidase SurE (250 aa).

Asp-8, Asp-9, Ser-39, and Asn-92 together coordinate a divalent metal cation.

This sequence belongs to the SurE nucleotidase family. Requires a divalent metal cation as cofactor.

It is found in the cytoplasm. It catalyses the reaction a ribonucleoside 5'-phosphate + H2O = a ribonucleoside + phosphate. Its function is as follows. Nucleotidase that shows phosphatase activity on nucleoside 5'-monophosphates. The polypeptide is 5'-nucleotidase SurE (Vibrio cholerae serotype O1 (strain ATCC 39315 / El Tor Inaba N16961)).